The sequence spans 95 residues: uncharacterized protein (95 aa).

This is an uncharacterized protein from Methanocaldococcus jannaschii (strain ATCC 43067 / DSM 2661 / JAL-1 / JCM 10045 / NBRC 100440) (Methanococcus jannaschii).